The chain runs to 274 residues: Phosphatidylglycerol--prolipoprotein diacylglyceryl transferase (274 aa).

Helical transmembrane passes span V16–F36, F62–Y82, I94–W114, and L129–I149. R150 lines the a 1,2-diacyl-sn-glycero-3-phospho-(1'-sn-glycerol) pocket. Transmembrane regions (helical) follow at residues V184–Y204, G213–F233, and L247–I267.

The protein belongs to the Lgt family.

It is found in the cell inner membrane. The catalysed reaction is L-cysteinyl-[prolipoprotein] + a 1,2-diacyl-sn-glycero-3-phospho-(1'-sn-glycerol) = an S-1,2-diacyl-sn-glyceryl-L-cysteinyl-[prolipoprotein] + sn-glycerol 1-phosphate + H(+). The protein operates within protein modification; lipoprotein biosynthesis (diacylglyceryl transfer). Its function is as follows. Catalyzes the transfer of the diacylglyceryl group from phosphatidylglycerol to the sulfhydryl group of the N-terminal cysteine of a prolipoprotein, the first step in the formation of mature lipoproteins. The sequence is that of Phosphatidylglycerol--prolipoprotein diacylglyceryl transferase from Chlamydia muridarum (strain MoPn / Nigg).